Here is a 208-residue protein sequence, read N- to C-terminus: Methenyltetrahydrofolate cyclohydrolase (208 aa).

Residues 25-46 (GAAAISGAMGAALVSMVCNLTI) form a helical membrane-spanning segment.

The protein belongs to the cyclodeaminase/cyclohydrolase family. In terms of assembly, homodimer.

It is found in the membrane. The enzyme catalyses (6R)-5,10-methenyltetrahydrofolate + H2O = (6R)-10-formyltetrahydrofolate + H(+). It participates in one-carbon metabolism; formaldehyde assimilation via serine pathway. Its function is as follows. Required for both C1 and C2 metabolism. The chain is Methenyltetrahydrofolate cyclohydrolase (fchA) from Methylorubrum extorquens (strain ATCC 14718 / DSM 1338 / JCM 2805 / NCIMB 9133 / AM1) (Methylobacterium extorquens).